The sequence spans 286 residues: Ribose-phosphate pyrophosphokinase (286 aa).

Residues 34–36 (DGE) and 91–93 (RQH) contribute to the ATP site. Mg(2+)-binding residues include H124 and D161. K184 is an active-site residue. D-ribose 5-phosphate-binding positions include R186, D210, and 214 to 218 (STGGT).

This sequence belongs to the ribose-phosphate pyrophosphokinase family. Class III (archaeal) subfamily. As to quaternary structure, homodimer. Mg(2+) is required as a cofactor.

The protein resides in the cytoplasm. It catalyses the reaction D-ribose 5-phosphate + ATP = 5-phospho-alpha-D-ribose 1-diphosphate + AMP + H(+). Its pathway is metabolic intermediate biosynthesis; 5-phospho-alpha-D-ribose 1-diphosphate biosynthesis; 5-phospho-alpha-D-ribose 1-diphosphate from D-ribose 5-phosphate (route I): step 1/1. Functionally, involved in the biosynthesis of the central metabolite phospho-alpha-D-ribosyl-1-pyrophosphate (PRPP) via the transfer of pyrophosphoryl group from ATP to 1-hydroxyl of ribose-5-phosphate (Rib-5-P). The protein is Ribose-phosphate pyrophosphokinase of Thermoplasma volcanium (strain ATCC 51530 / DSM 4299 / JCM 9571 / NBRC 15438 / GSS1).